The chain runs to 1331 residues: Receptor-type adenylate cyclase B (1331 aa).

Topologically, residues 1–33 (MYADATHPRRACWCGAGGVSGCVRQRHAYRCSR) are cytoplasmic. A helical membrane pass occupies residues 34–54 (LLAGVLLIVGALTLTLAVSTV). Over 55–898 (PAAWAAGAVA…SHALTPAQRG (844 aa)) the chain is Extracellular. 5 N-linked (GlcNAc...) asparagine glycosylation sites follow: N255, N429, N558, N574, and N657. Residues 899 to 919 (GAIAGIALLTVILLAVAGLAL) traverse the membrane as a helical segment. The Cytoplasmic portion of the chain corresponds to 920–1331 (YCCMDNRNND…PTVCNVRGAH (412 aa)). Positions 940–1094 (TLLFTDIESS…DTSNMAARTE (155 aa)) constitute a Guanylate cyclase domain. The Mg(2+) site is built by D945 and D988.

This sequence belongs to the adenylyl cyclase class-3 family. The cofactor is Mg(2+).

It is found in the membrane. The catalysed reaction is ATP = 3',5'-cyclic AMP + diphosphate. Could act as a receptor for an unknown ligand. In Leishmania donovani, this protein is Receptor-type adenylate cyclase B (RAC-B).